The following is a 385-amino-acid chain: MNIWAPAPEPPTKLGRHRQLAPGCGLHVSPIQLGAMSIGDKWHPYGMGTMDKEASFKLLDAFYNAGGNFIDTANVYQDETSEEFIGEWMEARGNRDQMVVATKYSLVYKRGASFEEIPQKTQYVGNSLKSMHISVHDSLRKLRTSYIDIFYVHFWDYTCTIEEVMNGLHNLVAQGKVLYLGVSDTPAWVVSKANNYARMAGKTPFVIYEGEWNITMRDMERDIIPMCIHEGMAIAPWNVLCAGKIRTDAEEERRLKSGEGGRTLLQFDGWLRNETERKVSKALEKVAEEIGAKSITSVAIAYLMQKFPYVFPIVGGRKVEHLYANLEALDISLSPEQMQFLNDTVPFNKGFPYLLFGDGSDYNIVHKAAGHYDKWPAQQAIRPQK.

Tyr-76 (proton donor) is an active-site residue. Residue Asn-238–Asp-248 participates in NADP(+) binding.

It belongs to the aldo/keto reductase family. Aldo/keto reductase 2 subfamily. Post-translationally, the N-terminus is blocked.

It catalyses the reaction an aromatic primary alcohol + NADP(+) = an aromatic aldehyde + NADPH + H(+). This chain is Aryl-alcohol dehydrogenase [NADP(+)], found in Phanerodontia chrysosporium (White-rot fungus).